The primary structure comprises 308 residues: Oxygen-dependent coproporphyrinogen-III oxidase (308 aa).

Position 100 (Ser100) interacts with substrate. Residues His104 and His114 each contribute to the a divalent metal cation site. The active-site Proton donor is His114. 116-118 (NFR) contacts substrate. A divalent metal cation is bound by residues His153 and His183. The interval 248–283 (YVEFNLVFDRGTIFGLQSGGRTESILSSMPPMATWK) is important for dimerization. 266–268 (GGR) provides a ligand contact to substrate.

Belongs to the aerobic coproporphyrinogen-III oxidase family. In terms of assembly, homodimer. It depends on a divalent metal cation as a cofactor.

Its subcellular location is the cytoplasm. The catalysed reaction is coproporphyrinogen III + O2 + 2 H(+) = protoporphyrinogen IX + 2 CO2 + 2 H2O. It participates in porphyrin-containing compound metabolism; protoporphyrin-IX biosynthesis; protoporphyrinogen-IX from coproporphyrinogen-III (O2 route): step 1/1. Involved in the heme biosynthesis. Catalyzes the aerobic oxidative decarboxylation of propionate groups of rings A and B of coproporphyrinogen-III to yield the vinyl groups in protoporphyrinogen-IX. This Francisella tularensis subsp. holarctica (strain OSU18) protein is Oxygen-dependent coproporphyrinogen-III oxidase.